Reading from the N-terminus, the 233-residue chain is Lipoprotein-releasing system ATP-binding protein LolD (233 aa).

Positions 6–233 (LQCDNLCKRY…TAELSLMGAE (228 aa)) constitute an ABC transporter domain. 42 to 49 (GSSGSGKS) contributes to the ATP binding site.

Belongs to the ABC transporter superfamily. Lipoprotein translocase (TC 3.A.1.125) family. The complex is composed of two ATP-binding proteins (LolD) and two transmembrane proteins (LolC and LolE).

It localises to the cell inner membrane. Part of the ABC transporter complex LolCDE involved in the translocation of mature outer membrane-directed lipoproteins, from the inner membrane to the periplasmic chaperone, LolA. Responsible for the formation of the LolA-lipoprotein complex in an ATP-dependent manner. In Shigella boydii serotype 4 (strain Sb227), this protein is Lipoprotein-releasing system ATP-binding protein LolD.